We begin with the raw amino-acid sequence, 99 residues long: Aspartyl/glutamyl-tRNA(Asn/Gln) amidotransferase subunit C (99 aa).

Belongs to the GatC family. Heterotrimer of A, B and C subunits.

The enzyme catalyses L-glutamyl-tRNA(Gln) + L-glutamine + ATP + H2O = L-glutaminyl-tRNA(Gln) + L-glutamate + ADP + phosphate + H(+). It carries out the reaction L-aspartyl-tRNA(Asn) + L-glutamine + ATP + H2O = L-asparaginyl-tRNA(Asn) + L-glutamate + ADP + phosphate + 2 H(+). Functionally, allows the formation of correctly charged Asn-tRNA(Asn) or Gln-tRNA(Gln) through the transamidation of misacylated Asp-tRNA(Asn) or Glu-tRNA(Gln) in organisms which lack either or both of asparaginyl-tRNA or glutaminyl-tRNA synthetases. The reaction takes place in the presence of glutamine and ATP through an activated phospho-Asp-tRNA(Asn) or phospho-Glu-tRNA(Gln). In Solibacter usitatus (strain Ellin6076), this protein is Aspartyl/glutamyl-tRNA(Asn/Gln) amidotransferase subunit C.